The following is a 336-amino-acid chain: Protein FPV127 (336 aa).

A disordered region spans residues 1-22 (MGGGLVLPTRDPPKEQDTSETA).

The protein belongs to the poxviruses A16/G9/J5 family.

The chain is Protein FPV127 from Vertebrata (FPV).